The chain runs to 433 residues: Serine--tRNA ligase (433 aa).

235–237 (TSE) contacts L-serine. Residue 266 to 268 (RSE) coordinates ATP. Residue glutamate 289 coordinates L-serine. 353–356 (EISS) is an ATP binding site. Residue serine 388 coordinates L-serine.

This sequence belongs to the class-II aminoacyl-tRNA synthetase family. Type-1 seryl-tRNA synthetase subfamily. In terms of assembly, homodimer. The tRNA molecule binds across the dimer.

Its subcellular location is the cytoplasm. The enzyme catalyses tRNA(Ser) + L-serine + ATP = L-seryl-tRNA(Ser) + AMP + diphosphate + H(+). It carries out the reaction tRNA(Sec) + L-serine + ATP = L-seryl-tRNA(Sec) + AMP + diphosphate + H(+). The protein operates within aminoacyl-tRNA biosynthesis; selenocysteinyl-tRNA(Sec) biosynthesis; L-seryl-tRNA(Sec) from L-serine and tRNA(Sec): step 1/1. Its function is as follows. Catalyzes the attachment of serine to tRNA(Ser). Is also able to aminoacylate tRNA(Sec) with serine, to form the misacylated tRNA L-seryl-tRNA(Sec), which will be further converted into selenocysteinyl-tRNA(Sec). The polypeptide is Serine--tRNA ligase (Burkholderia ambifaria (strain MC40-6)).